A 331-amino-acid polypeptide reads, in one-letter code: MSLLCYNRGCGQRFDPETNTEDSCTYHPGVPVFHDALKGWSCCKRRTTDFSDFLSIVGCTKGLHNSEKPPEPVKPDVKSTTERKELAELKPKFQEHIIQAPKPLETIKRPSPDEPMTNLQLKVSASLKQALDKLKLSSENEEKKEEDSDEIKIGTPCKNAGCSKTYQGPHSTEEVCQYHSGVPIFHEGMKYWSCCKRKTSDFNTFLAQEGCTTGTHVWTKKDAGKKVVPCRHDWHQTGGEVTVSIYAKNSVPDLSYVEANSTMLNIHIVFEGEKEFHRNVKLWGVIDVKRSYVNMTATKIEVSMRKAEPLLWASLELPVSNTQQTNENSDQ.

Residues C5, C10, C24, H27, C42, C43, C59, H64, C157, C162, C176, H179, C194, C195, C211, and H216 each coordinate Zn(2+). 2 consecutive CHORD domains span residues 5 to 64 and 157 to 216; these read CYNR…KGLH and CKNA…TGTH. Positions 227 to 316 constitute a CS domain; that stretch reads VVPCRHDWHQ…AEPLLWASLE (90 aa).

Its function is as follows. Regulates centrosome duplication. The polypeptide is Cysteine and histidine-rich domain-containing protein 1 (CHORDC1) (Gallus gallus (Chicken)).